Here is a 766-residue protein sequence, read N- to C-terminus: Isocitrate lyase 2 (766 aa).

Position 106 to 108 (106 to 108) interacts with substrate; that stretch reads GGW. Asp-177 contributes to the Mg(2+) binding site. Residue Cys-215 is the Proton acceptor of the active site. Substrate-binding positions include 216 to 217, Arg-252, 487 to 491, and Thr-522; these read GH and NLSPS.

Belongs to the isocitrate lyase/PEP mutase superfamily. Isocitrate lyase family. It depends on Mg(2+) as a cofactor.

The enzyme catalyses D-threo-isocitrate = glyoxylate + succinate. The protein operates within carbohydrate metabolism; glyoxylate cycle; (S)-malate from isocitrate: step 1/2. Functionally, involved in the persistence and virulence of Mycobacterium. Catalyzes the reversible formation of succinate and glyoxylate from isocitrate, a key step of the glyoxylate cycle, which operates as an anaplerotic route for replenishing the tricarboxylic acid cycle during growth on fatty acid substrates. The chain is Isocitrate lyase 2 (aceA) from Mycobacterium bovis (strain ATCC BAA-935 / AF2122/97).